The primary structure comprises 86 residues: Small ribosomal subunit protein bS20 (86 aa).

The interval 1–25 (MANIKSQIKRIRTNEKARQRNKAYK) is disordered. Positions 12–25 (RTNEKARQRNKAYK) are enriched in basic and acidic residues.

This sequence belongs to the bacterial ribosomal protein bS20 family.

Functionally, binds directly to 16S ribosomal RNA. The protein is Small ribosomal subunit protein bS20 of Beutenbergia cavernae (strain ATCC BAA-8 / DSM 12333 / CCUG 43141 / JCM 11478 / NBRC 16432 / NCIMB 13614 / HKI 0122).